The following is a 991-amino-acid chain: MQPSDRMRALPRRARVMIMVTVALIALLVIGPRLVVGYTDWLWFGEVGYRRVWGTVLVTRLILFTAVTLLVGAVIFAAVVWAYRSRPLFAASGANTAKDPVERYREVVSRRPRSFTVGIALLLALPFGLHAQASWETVQLFLHGGAFGTVDAEFGYDIGFYVFDLPFYRLILAWLFIAVFLALLIGLGTHYLFGGIRLAPSKDHVIEVSRPARVQLAVFAGTFIALKAASYWLDRYSLLWSGRKEPTFTGAGYTDINAVLPARLIMVAIAVLCAVAFFAAIAVRDLRIPAMATALLVLSAILVGGIYPALIEQFSVRPNAADRESPYIERNIAATRQAYGIGPDRVDYLDYPGVGTRSPRDIPADVTTIANARLLDPTVLSRTFTQQQQLKNFYGFPEHLNIDRYTIDGQLTDYIVAARELSPNSLSGNQTQWINRHTVYTHGNGFIAAPANRVNAAVRDVAGQSASSDSGYPIYAVSDIASQVGGDQVIPVEQPRIYFGEVIAQADPDYAIVGGPEGVPPREYDTDTAQYTYTGTGGVPVGSWVNRLAFAARYGERNILFSGAIGSESKIIFNRDPAARVEHVAPWLTTDSNPYPAVVGGRIVWIVDGYTTAAHYPYSQVGSLAEPVVNDTGRTLAREEVSYVRNSVKATVDAYDGTVTLYQVDENDPVLGAWMKVFPGTVQPPTAIPTELRAHFRYPEDLFRLQRDLLAKYHVDDPREFFTTNAFWSVPSDPTADTGGEQPPYYVLVGDAGTAAPSFRLTSAMVGFNREFLSAYLSAHSDPENYGRIDILRLPTDTQTQGPRQTQNSMISDTRVASERTLLERSNRIYYANLLTLPIADGGILYVEPVFTERLTSTPNSSTFPQLARVLVSYREPGTGGVRIGYAPTLAEALDQVFGTGTGAVATAPGGDATTPPPTGGQPPAPPPPGAPPAPPPATSDQLTAAVLELNNALANLREAQHTGDFTTYGAALDRLQQAIDTYLAAGGTPH.

A run of 7 helical transmembrane segments spans residues Val16–Val36, Leu61–Trp81, Phe115–Trp135, Leu170–His190, Val214–Asp234, Arg263–Val283, and Met291–Ile311. A disordered region spans residues Thr902–Ser940. The span at Gly903 to Thr914 shows a compositional bias: low complexity. Over residues Thr915–Ala938 the composition is skewed to pro residues.

This sequence belongs to the UPF0182 family.

It is found in the cell membrane. This chain is UPF0182 protein RHA1_ro08670, found in Rhodococcus jostii (strain RHA1).